Here is a 452-residue protein sequence, read N- to C-terminus: La-related protein 1B (452 aa).

The segment covering 1-22 (MATTASSAANSASRFSIDSSIS) has biased composition (low complexity). The segment at 1–251 (MATTASSAAN…GFSHRNYSGR (251 aa)) is disordered. The residue at position 2 (Ala2) is an N-acetylalanine. Positions 44 to 68 (LSLSQDDPFSAPSVSPPTGNNSSDY) are enriched in polar residues. Composition is skewed to low complexity over residues 99-117 (SWPA…SPSL), 136-163 (ATSN…VNNS), 171-185 (NNNT…NVSN), and 206-223 (SGNF…SYPR). The span at 225–236 (EGLHHGNRRNYE) shows a compositional bias: basic and acidic residues. The span at 237-247 (HGNQSGFSHRN) shows a compositional bias: polar residues. In terms of domain architecture, HTH La-type RNA-binding spans 328-417 (RNFDAILYNK…RGDWDKYLLP (90 aa)). Residues 419–452 (EPSRSGPAAGASNNASLVSQIESMTLSERSREGV) form a disordered region. Over residues 422-434 (RSGPAAGASNNAS) the composition is skewed to low complexity. The segment covering 435–445 (LVSQIESMTLS) has biased composition (polar residues).

Belongs to the LARP family.

It is found in the cytoplasm. Functionally, promotes leaf senescence. This is La-related protein 1B (LARP1B) from Arabidopsis thaliana (Mouse-ear cress).